The sequence spans 194 residues: MAAGQPRPPPPPSSVRTERVLRAACAAMAAAGALLLGFSAETKTVIFVQKKAVPKDVQALWVLIVAAAAAAAYHAAQLARCLCMDRLAGGGGGCRRLRRAVACATFLLDKGCAYMVLATTVAALQACFVGLLGVEALQWSKLCNIYTRFCEQAAAGMVCSLVAAAGMAVLSAFSARDLFRRRRPCSPCVQVQQV.

At 1–27 the chain is on the cytoplasmic side; sequence MAAGQPRPPPPPSSVRTERVLRAACAA. The helical transmembrane segment at 28–48 threads the bilayer; the sequence is MAAAGALLLGFSAETKTVIFV. Over 49-58 the chain is Extracellular; that stretch reads QKKAVPKDVQ. A helical transmembrane segment spans residues 59–79; the sequence is ALWVLIVAAAAAAAYHAAQLA. The Cytoplasmic segment spans residues 80 to 113; it reads RCLCMDRLAGGGGGCRRLRRAVACATFLLDKGCA. A helical membrane pass occupies residues 114–134; it reads YMVLATTVAALQACFVGLLGV. The Extracellular segment spans residues 135–152; sequence EALQWSKLCNIYTRFCEQ. Residues 153-173 traverse the membrane as a helical segment; sequence AAAGMVCSLVAAAGMAVLSAF. Over 174–194 the chain is Cytoplasmic; sequence SARDLFRRRRPCSPCVQVQQV.

It belongs to the Casparian strip membrane proteins (CASP) family. Homodimer and heterodimers.

It is found in the cell membrane. The sequence is that of CASP-like protein 2C2 from Sorghum bicolor (Sorghum).